Here is a 427-residue protein sequence, read N- to C-terminus: Serine--tRNA ligase (427 aa).

233–235 serves as a coordination point for L-serine; the sequence is TAE. ATP is bound at residue 264–266; that stretch reads RSE. Glutamate 287 serves as a coordination point for L-serine. An ATP-binding site is contributed by 351–354; sequence EISS. Serine 386 lines the L-serine pocket.

The protein belongs to the class-II aminoacyl-tRNA synthetase family. Type-1 seryl-tRNA synthetase subfamily. Homodimer. The tRNA molecule binds across the dimer.

The protein localises to the cytoplasm. It catalyses the reaction tRNA(Ser) + L-serine + ATP = L-seryl-tRNA(Ser) + AMP + diphosphate + H(+). The enzyme catalyses tRNA(Sec) + L-serine + ATP = L-seryl-tRNA(Sec) + AMP + diphosphate + H(+). It participates in aminoacyl-tRNA biosynthesis; selenocysteinyl-tRNA(Sec) biosynthesis; L-seryl-tRNA(Sec) from L-serine and tRNA(Sec): step 1/1. In terms of biological role, catalyzes the attachment of serine to tRNA(Ser). Is also able to aminoacylate tRNA(Sec) with serine, to form the misacylated tRNA L-seryl-tRNA(Sec), which will be further converted into selenocysteinyl-tRNA(Sec). This Dechloromonas aromatica (strain RCB) protein is Serine--tRNA ligase.